Reading from the N-terminus, the 1553-residue chain is Pre-mRNA cleavage complex 2 protein Pcf11 (1553 aa).

Position 2 is an N-acetylserine (Ser2). Residues 14–142 enclose the CID domain; it reads AREDACRDYQ…ALDVRVNSLD (129 aa). Ser120 is modified (phosphoserine). Phosphothreonine is present on Thr121. The segment at 167–186 is disordered; it reads NKSPDEPSTPGTVVSSPSIS. Residues Ser169 and Ser182 each carry the phosphoserine modification. The segment covering 174-186 has biased composition (low complexity); that stretch reads STPGTVVSSPSIS. Residues 208 to 235 are a coiled coil; sequence LLAKQKQLLELQQKKLELELEQAKAQLA. Residues 265-648 are disordered; sequence AVKTPHQVPV…KQQHRLSVDA (384 aa). Lys291 is covalently cross-linked (Glycyl lysine isopeptide (Lys-Gly) (interchain with G-Cter in SUMO2)). Over residues 308–318 the composition is skewed to basic and acidic residues; it reads HGKEQSHRKEF. Positions 321-342 are enriched in polar residues; the sequence is NTINQSDIKTSKNVPSEKLNSS. Residue Lys329 forms a Glycyl lysine isopeptide (Lys-Gly) (interchain with G-Cter in SUMO2) linkage. Basic and acidic residues-rich tracts occupy residues 343–365, 381–422, and 428–443; these read KQEK…DSKS, HTKD…DVKE, and EKKE…EHRV. Lys457 is covalently cross-linked (Glycyl lysine isopeptide (Lys-Gly) (interchain with G-Cter in SUMO2)). A compositionally biased stretch (basic residues) spans 476–487; it reads STRKRSRSRSPK. Residues Ser490, Ser495, Ser510, and Ser512 each carry the phosphoserine modification. The segment covering 495–509 has biased composition (basic residues); that stretch reads SPKRRDRRSPKRRQR. Composition is skewed to basic and acidic residues over residues 530-568 and 600-616; these read SHME…DRPQ and SGWE…EHSK. A Phosphoserine modification is found at Ser645. Residue Lys654 forms a Glycyl lysine isopeptide (Lys-Gly) (interchain with G-Cter in SUMO2) linkage. Ser705 is subject to Phosphoserine. Residues 707-733 are disordered; that stretch reads FNDRFPLKRPRYEDSDKPFVDGPASRF. Residues 716 to 725 are compositionally biased toward basic and acidic residues; it reads PRYEDSDKPF. Lys723 participates in a covalent cross-link: Glycyl lysine isopeptide (Lys-Gly) (interchain with G-Cter in SUMO2). A Phosphoserine modification is found at Ser777. Position 785 is a phosphothreonine (Thr785). Ser794 is subject to Phosphoserine. Asymmetric dimethylarginine occurs at positions 805, 820, and 833. Ser851 carries the phosphoserine modification. Residues 921 to 940 form a disordered region; the sequence is HGPSGAAIRFDGPHGQPGGG. 8 positions are modified to asymmetric dimethylarginine: Arg929, Arg944, Arg957, Arg982, Arg995, Arg1008, Arg1092, and Arg1103. Lys1276 participates in a covalent cross-link: Glycyl lysine isopeptide (Lys-Gly) (interchain with G-Cter in SUMO2). Positions 1286–1313 are disordered; the sequence is DSATAQVTEAVAQPPPEEDEDQNEDQDV. The segment covering 1301–1313 has biased composition (acidic residues); it reads PEEDEDQNEDQDV. Residues Lys1417, Lys1509, Lys1522, and Lys1544 each participate in a glycyl lysine isopeptide (Lys-Gly) (interchain with G-Cter in SUMO2) cross-link. The segment at 1516–1553 is disordered; sequence CESPKVKEEQIDAPPACSEESVATPTEIKTESDTVESV.

As to quaternary structure, associates with the phosphorylated CTD domain of POLR2A /RNA polymerase II. In terms of processing, phosphorylation at Ser-120 and/or Thr-121 by WNK1 weakens its association with POLR2A/RNA polymerase II, promoting transcript release from the chromatin template and mRNA export to the cytoplasm.

The protein resides in the nucleus. Component of pre-mRNA cleavage complex II, which promotes transcription termination by RNA polymerase II. In Mus musculus (Mouse), this protein is Pre-mRNA cleavage complex 2 protein Pcf11.